Reading from the N-terminus, the 162-residue chain is SCF ubiquitin ligase complex protein SKP1b (162 aa).

N-acetylserine is present on Ser2. An interaction with the F-box domain of F-box proteins region spans residues 100-162 (ILAANYLDIK…NEWCEDKGGN (63 aa)). 4-hydroxyproline is present on Pro143. Pro143 is a glycosylation site (O-linked (GlcNAc...) hydroxyproline).

It belongs to the SKP1 family. As to quaternary structure, multiprotein complex (SCF) with cullin and F-box-containing protein. Capable of undergoing aggregation. Post-translationally, O-linked glycan consists of linear Gal-Gal-Fuc-Gal-GlcNAc. Not glycosylated in prespore cells. In terms of processing, fpaA and fpaB seem to be identically glycosylated. Glycosylation is required for nuclear enrichment. Post-translationally, hydroxylated by phyA.

It is found in the cytoplasm. The protein resides in the nucleus. The protein is SCF ubiquitin ligase complex protein SKP1b (fpaB-1) of Dictyostelium discoideum (Social amoeba).